The chain runs to 85 residues: Conotoxin Lt28.4 (85 aa).

Positions 1-21 (MPKLEMMLLVLLILPLCYIDA) are cleaved as a signal peptide. A propeptide spanning residues 22-40 (VGPPPPWNMEDEIIEHWQK) is cleaved from the precursor.

This sequence belongs to the conotoxin D superfamily. Contains 5 disulfide bonds. In terms of tissue distribution, expressed by the venom duct.

The protein localises to the secreted. In terms of biological role, probable neurotoxin. This is Conotoxin Lt28.4 from Conus litteratus (Lettered cone).